A 266-amino-acid polypeptide reads, in one-letter code: Non-structural maintenance of chromosomes element 1 homolog (266 aa).

An interaction with NSMCE3 region spans residues Met-1–Ala-102. The RING-type; atypical zinc-finger motif lies at Cys-191–Asn-232. A compositionally biased stretch (basic and acidic residues) spans Phe-243–Gly-252. Residues Phe-243–His-266 form a disordered region. Residues Ser-256 to His-266 show a composition bias toward basic residues.

It belongs to the NSE1 family. Component of the SMC5-SMC6 complex which consists at least of SMC5, SMC6, NSMCE2, NSMCE1, NSMCE4A or EID3 and NSMCE3. NSMCE1, NSMCE4A or EID3 and NSMCE3 probably form a subcomplex that bridges the head domains of the SMC5-SMC6 heterodimer. Interacts with NSMCE3. In terms of processing, ubiquitinated.

The protein localises to the nucleus. It is found in the chromosome. Its subcellular location is the telomere. It carries out the reaction S-ubiquitinyl-[E2 ubiquitin-conjugating enzyme]-L-cysteine + [acceptor protein]-L-lysine = [E2 ubiquitin-conjugating enzyme]-L-cysteine + N(6)-ubiquitinyl-[acceptor protein]-L-lysine.. Its function is as follows. RING-type zinc finger-containing E3 ubiquitin ligase that assembles with melanoma antigen protein (MAGE) to catalyze the direct transfer of ubiquitin from E2 ubiquitin-conjugating enzyme to a specific substrate. Within MAGE-RING ubiquitin ligase complex, MAGE stimulates and specifies ubiquitin ligase activity likely through recruitment and/or stabilization of the E2 ubiquitin-conjugating enzyme at the E3:substrate complex. Involved in maintenance of genome integrity, DNA damage response and DNA repair. NSMCE3/MAGEG1 and NSMCE1 ubiquitin ligase are components of SMC5-SMC6 complex and may positively regulate homologous recombination-mediated DNA repair. This chain is Non-structural maintenance of chromosomes element 1 homolog (NSMCE1), found in Bos taurus (Bovine).